We begin with the raw amino-acid sequence, 463 residues long: Lariat debranching enzyme (463 aa).

Residues Cys-8, His-10, Asp-33, and Asn-78 each contribute to the a divalent metal cation site. The tract at residues 118–148 (SGIYSAMDYKKGRYEGLPYNYKMLKSIYHTR) is lariat recognition loop. The a divalent metal cation site is built by His-168, His-220, and His-222. A disordered region spans residues 250–324 (SGFSMKGLNE…QVTKFLALDK (75 aa)). Over residues 256–267 (GLNEPSQERLPV) the composition is skewed to polar residues. Basic and acidic residues-rich tracts occupy residues 276-289 (DEEG…EKQD) and 299-323 (CRKE…LALD).

It belongs to the lariat debranching enzyme family. Fe(2+) serves as cofactor. It depends on Zn(2+) as a cofactor. Mn(2+) is required as a cofactor.

The protein resides in the nucleus. The protein localises to the cytoplasm. Active in presence of diverse metals including Fe(2+), Zn(2+) and Mn(2+). Binds two metal cations in two adjacent alpha and beta metal-binding pockets. Functionally, cleaves the 2'-5' phosphodiester linkage at the branch point of lariat intron pre-mRNAs after splicing and converts them into linear molecules that are subsequently degraded, thereby facilitating ribonucleotide turnover. This Schizosaccharomyces pombe (strain 972 / ATCC 24843) (Fission yeast) protein is Lariat debranching enzyme (dbr1).